We begin with the raw amino-acid sequence, 544 residues long: Methyl-accepting chemotaxis protein McpP (544 aa).

The next 3 helical transmembrane spans lie at 12-32, 50-70, and 192-212; these read RLWLILVVAVAMLVVLGLLML, VVQTAAGVLAYYQGLEAAGTL, and DASLVGVGIALLMALVVMLIA. Residues 213–267 enclose the HAMP domain; the sequence is RSIARPLQEAVQAMGNIASGESDLTRRLDTHGSDEITHLGEHFNRFNGKLQGVVG. The Methyl-accepting transducer domain maps to 272–508; the sequence is AAHALAQSAG…EINRNVLDTA (237 aa).

It belongs to the methyl-accepting chemotaxis (MCP) protein family.

The protein localises to the cell membrane. In terms of biological role, chemotactic-signal transducers respond to changes in the concentration of attractants and repellents in the environment, transduce a signal from the outside to the inside of the cell, and facilitate sensory adaptation through the variation of the level of methylation. McpP is a chemoreceptor that responds specifically to some C2 and C3 carboxylic acids. Recognizes acetate, pyruvate, propionate, and L-lactate. The chain is Methyl-accepting chemotaxis protein McpP from Pseudomonas putida (strain ATCC 47054 / DSM 6125 / CFBP 8728 / NCIMB 11950 / KT2440).